Here is a 417-residue protein sequence, read N- to C-terminus: Probable glucuronosyltransferase Os01g0926700 (417 aa).

Residues 1 to 3 are Cytoplasmic-facing; sequence MRR. Residues 4 to 24 form a helical; Signal-anchor for type II membrane protein membrane-spanning segment; sequence WVLAIAILAAAVCFFLGAQAQ. Residues 25–417 are Lumenal-facing; the sequence is EVRQGHQTER…AGPVGDLKPW (393 aa). Asn144 and Asn405 each carry an N-linked (GlcNAc...) asparagine glycan.

Belongs to the glycosyltransferase 47 family.

The protein resides in the golgi apparatus membrane. Its function is as follows. Involved in the synthesis of glucuronoxylan hemicellulose in secondary cell walls. The chain is Probable glucuronosyltransferase Os01g0926700 from Oryza sativa subsp. japonica (Rice).